We begin with the raw amino-acid sequence, 470 residues long: FAD-dependent monooxygenase SAT7 (470 aa).

A helical membrane pass occupies residues glycine 28 to valine 48. Glutamate 58, alanine 71, and arginine 143 together coordinate FAD. Residues arginine 227 and tyrosine 260 contribute to the active site. FAD contacts are provided by aspartate 351 and alanine 364.

The protein belongs to the paxM FAD-dependent monooxygenase family. The cofactor is FAD.

It localises to the membrane. Its pathway is mycotoxin biosynthesis. Its function is as follows. FAD-dependent monooxygenase; part of the satratoxin SC1 cluster involved in the biosynthesis of satratoxins, trichothecene mycotoxins that are associated with human food poisonings. Satratoxins are suggested to be made by products of multiple gene clusters (SC1, SC2 and SC3) that encode 21 proteins in all, including polyketide synthases, acetyltransferases, and other enzymes expected to modify the trichothecene skeleton. SC1 encodes 10 proteins, SAT1 to SAT10. The largest are SAT8, which encodes a putative polyketide synthase (PKS) with a conventional non-reducing architecture, and SAT10, a putative protein containing four ankyrin repeats and thus may be involved in protein scaffolding. The putative short-chain reductase SAT3 may assist the PKS in some capacity. SAT6 contains a secretory lipase domain and acts probably as a trichothecene esterase. SAT5 encodes a putative acetyltransferase, and so, with SAT6, may affect endogenous protection from toxicity. The probable transcription factor SAT9 may regulate the expression of the SC1 cluster. SC2 encodes proteins SAT11 to SAT16, the largest of which encodes the putative reducing PKS SAT13. SAT11 is a cytochrome P450 monooxygenase, while SAT14 and SAT16 are probable acetyltransferases. The SC2 cluster may be regulated by the transcription factor SAT15. SC3 is a small cluster that encodes 5 proteins, SAT17 to SAT21. SAT21 is a putative MFS-type transporter which may have a role in exporting secondary metabolites. The four other proteins putatively encoded in SC3 include the taurine hydroxylase-like protein SAT17, the O-methyltransferase SAT18, the acetyltransferase SAT19, and the Cys6-type zinc finger SAT20, the latter being probably involved in regulation of SC3 expression. The polypeptide is FAD-dependent monooxygenase SAT7 (Stachybotrys chartarum (strain CBS 109288 / IBT 7711) (Toxic black mold)).